We begin with the raw amino-acid sequence, 156 residues long: ATP synthase subunit b (156 aa).

Residues 4 to 26 (GATFWGPMISFALFVWFTMKFVW) traverse the membrane as a helical segment.

This sequence belongs to the ATPase B chain family. In terms of assembly, F-type ATPases have 2 components, F(1) - the catalytic core - and F(0) - the membrane proton channel. F(1) has five subunits: alpha(3), beta(3), gamma(1), delta(1), epsilon(1). F(0) has three main subunits: a(1), b(2) and c(10-14). The alpha and beta chains form an alternating ring which encloses part of the gamma chain. F(1) is attached to F(0) by a central stalk formed by the gamma and epsilon chains, while a peripheral stalk is formed by the delta and b chains.

It localises to the cell inner membrane. F(1)F(0) ATP synthase produces ATP from ADP in the presence of a proton or sodium gradient. F-type ATPases consist of two structural domains, F(1) containing the extramembraneous catalytic core and F(0) containing the membrane proton channel, linked together by a central stalk and a peripheral stalk. During catalysis, ATP synthesis in the catalytic domain of F(1) is coupled via a rotary mechanism of the central stalk subunits to proton translocation. Its function is as follows. Component of the F(0) channel, it forms part of the peripheral stalk, linking F(1) to F(0). The protein is ATP synthase subunit b of Halorhodospira halophila (strain DSM 244 / SL1) (Ectothiorhodospira halophila (strain DSM 244 / SL1)).